The primary structure comprises 365 residues: MSQKQTPLKLNTFQGISIVANTMLGAGLLTLPRALTTKANTPDGWITLILEGFIFIFFIYLNTLIQKKHQYPSLFEYLKEGLGKWIGSIIGLLICGYFLGVASFETRAMAEMVKFFLLERTPIQVIILTFICCGIYLMVGGLSDVSRLFPFYLTVTIIILLIVFGISFKIFDINNLRPVLGEGLGPIANSLTVVSISFLGMEVMLFLPEHMKKKKYTFRYASLGFLIPIILYILTYIIVVGALTAPEVKTLIWPTISLFQSFELKGIFIERFESFLLVVWIIQFFTTFVIYGYFAANGLKKTFGLSTKTSMVIIGITVFYFSLWPDDANQVMMYSDYLGYIFVSLFLLPFILFFIVALKRRITTK.

11 helical membrane passes run 12-32 (TFQGISIVANTMLGAGLLTLP), 45-65 (WITLILEGFIFIFFIYLNTLI), 85-105 (WIGSIIGLLICGYFLGVASFE), 122-142 (PIQVIILTFICCGIYLMVGGL), 148-168 (LFPFYLTVTIIILLIVFGISF), 187-207 (IANSLTVVSISFLGMEVMLFL), 223-243 (LGFLIPIILYILTYIIVVGAL), 250-270 (TLIWPTISLFQSFELKGIFIE), 275-295 (FLLVVWIIQFFTTFVIYGYFA), 303-323 (FGLSTKTSMVIIGITVFYFSL), and 338-358 (LGYIFVSLFLLPFILFFIVAL).

This sequence belongs to the amino acid-polyamine-organocation (APC) superfamily. Spore germination protein (SGP) (TC 2.A.3.9) family.

The protein localises to the cell membrane. Its function is as follows. Involved in the germinative response to L-alanine. Could be an amino acid transporter. Forms a complex at the inner spore membrane which acts as a receptor for L-alanine, thus is involved in the stimulation of germination in response to alanine. Can stimulate germination in the absence of gerD and gerK gene products (fructose and glucose receptors, respectively), but the response is improved in their presence. The sequence is that of Spore germination protein A2 (gerAB) from Bacillus subtilis (strain 168).